Reading from the N-terminus, the 207-residue chain is Large ribosomal subunit protein bL25 (207 aa).

A disordered region spans residues 186-207 (SKPRGGAGAEGEADAEGEAAAE). Acidic residues predominate over residues 196–207 (GEADAEGEAAAE).

Belongs to the bacterial ribosomal protein bL25 family. CTC subfamily. As to quaternary structure, part of the 50S ribosomal subunit; part of the 5S rRNA/L5/L18/L25 subcomplex. Contacts the 5S rRNA. Binds to the 5S rRNA independently of L5 and L18.

Functionally, this is one of the proteins that binds to the 5S RNA in the ribosome where it forms part of the central protuberance. This is Large ribosomal subunit protein bL25 from Methylobacillus flagellatus (strain ATCC 51484 / DSM 6875 / VKM B-1610 / KT).